The chain runs to 474 residues: ATP synthase subunit beta (474 aa).

Position 151–158 (151–158) interacts with ATP; that stretch reads GGAGVGKT.

Belongs to the ATPase alpha/beta chains family. F-type ATPases have 2 components, CF(1) - the catalytic core - and CF(0) - the membrane proton channel. CF(1) has five subunits: alpha(3), beta(3), gamma(1), delta(1), epsilon(1). CF(0) has three main subunits: a(1), b(2) and c(9-12). The alpha and beta chains form an alternating ring which encloses part of the gamma chain. CF(1) is attached to CF(0) by a central stalk formed by the gamma and epsilon chains, while a peripheral stalk is formed by the delta and b chains.

It is found in the cell inner membrane. It catalyses the reaction ATP + H2O + 4 H(+)(in) = ADP + phosphate + 5 H(+)(out). Its function is as follows. Produces ATP from ADP in the presence of a proton gradient across the membrane. The catalytic sites are hosted primarily by the beta subunits. This Ruegeria sp. (strain TM1040) (Silicibacter sp.) protein is ATP synthase subunit beta.